A 372-amino-acid chain; its full sequence is Cobalt-precorrin-5B C(1)-methyltransferase (372 aa).

This sequence belongs to the CbiD family.

It catalyses the reaction Co-precorrin-5B + S-adenosyl-L-methionine = Co-precorrin-6A + S-adenosyl-L-homocysteine. It participates in cofactor biosynthesis; adenosylcobalamin biosynthesis; cob(II)yrinate a,c-diamide from sirohydrochlorin (anaerobic route): step 6/10. Functionally, catalyzes the methylation of C-1 in cobalt-precorrin-5B to form cobalt-precorrin-6A. The protein is Cobalt-precorrin-5B C(1)-methyltransferase of Geobacillus kaustophilus (strain HTA426).